The following is a 457-amino-acid chain: UDP-N-acetylmuramate--L-alanine ligase (457 aa).

Position 109–115 (109–115) interacts with ATP; that stretch reads GTDGKTT.

It belongs to the MurCDEF family.

The protein resides in the cytoplasm. It catalyses the reaction UDP-N-acetyl-alpha-D-muramate + L-alanine + ATP = UDP-N-acetyl-alpha-D-muramoyl-L-alanine + ADP + phosphate + H(+). Its pathway is cell wall biogenesis; peptidoglycan biosynthesis. Functionally, cell wall formation. The sequence is that of UDP-N-acetylmuramate--L-alanine ligase (murC) from Thermotoga maritima (strain ATCC 43589 / DSM 3109 / JCM 10099 / NBRC 100826 / MSB8).